The chain runs to 119 residues: Holo-[acyl-carrier-protein] synthase (119 aa).

2 residues coordinate Mg(2+): Asp-8 and Glu-58.

Belongs to the P-Pant transferase superfamily. AcpS family. It depends on Mg(2+) as a cofactor.

It localises to the cytoplasm. The enzyme catalyses apo-[ACP] + CoA = holo-[ACP] + adenosine 3',5'-bisphosphate + H(+). Transfers the 4'-phosphopantetheine moiety from coenzyme A to a Ser of acyl-carrier-protein. The sequence is that of Holo-[acyl-carrier-protein] synthase from Bacillus cereus (strain ZK / E33L).